Reading from the N-terminus, the 141-residue chain is Large ribosomal subunit protein uL11 (141 aa).

This sequence belongs to the universal ribosomal protein uL11 family. Part of the ribosomal stalk of the 50S ribosomal subunit. Interacts with L10 and the large rRNA to form the base of the stalk. L10 forms an elongated spine to which L12 dimers bind in a sequential fashion forming a multimeric L10(L12)X complex. Post-translationally, one or more lysine residues are methylated.

Its function is as follows. Forms part of the ribosomal stalk which helps the ribosome interact with GTP-bound translation factors. The protein is Large ribosomal subunit protein uL11 of Kosmotoga olearia (strain ATCC BAA-1733 / DSM 21960 / TBF 19.5.1).